The primary structure comprises 87 residues: Hemocyanin alpha chain (87 aa).

This sequence belongs to the tyrosinase family. Hemocyanin subfamily. In terms of assembly, polymer that contains six different types of chains (alpha, beta, gamma, delta, epsilon, and zeta). Hemolymph.

Its subcellular location is the secreted. The protein localises to the extracellular space. In terms of biological role, hemocyanins are copper-containing oxygen carriers occurring freely dissolved in the hemolymph of many mollusks and arthropods. In Tachypleus tridentatus (Japanese horseshoe crab), this protein is Hemocyanin alpha chain.